A 196-amino-acid chain; its full sequence is ATP-dependent Clp protease proteolytic subunit (196 aa).

Ser-97 serves as the catalytic Nucleophile. His-122 is an active-site residue.

It belongs to the peptidase S14 family. In terms of assembly, fourteen ClpP subunits assemble into 2 heptameric rings which stack back to back to give a disk-like structure with a central cavity, resembling the structure of eukaryotic proteasomes.

The protein resides in the cytoplasm. The enzyme catalyses Hydrolysis of proteins to small peptides in the presence of ATP and magnesium. alpha-casein is the usual test substrate. In the absence of ATP, only oligopeptides shorter than five residues are hydrolyzed (such as succinyl-Leu-Tyr-|-NHMec, and Leu-Tyr-Leu-|-Tyr-Trp, in which cleavage of the -Tyr-|-Leu- and -Tyr-|-Trp bonds also occurs).. Cleaves peptides in various proteins in a process that requires ATP hydrolysis. Has a chymotrypsin-like activity. Plays a major role in the degradation of misfolded proteins. This is ATP-dependent Clp protease proteolytic subunit from Lacticaseibacillus paracasei (strain ATCC 334 / BCRC 17002 / CCUG 31169 / CIP 107868 / KCTC 3260 / NRRL B-441) (Lactobacillus paracasei).